Here is a 27-residue protein sequence, read N- to C-terminus: U1-poneritoxin-Na3b (27 aa).

This sequence belongs to the ponericin-G family. As to expression, expressed by the venom gland.

It localises to the secreted. Shows a broad spectrum of activity against both Gram-positive and Gram-negative bacteria. Also has antimicrobial activity against S.cerevisiae. Has insecticidal and non-hemolytic activity. The chain is U1-poneritoxin-Na3b from Neoponera apicalis (Ant).